The sequence spans 251 residues: Anamorsin homolog (251 aa).

The interval 1 to 154 is N-terminal SAM-like domain; the sequence is MINFSNTLVI…AENPDFNKSD (154 aa). Residues 155-167 are linker; sequence DDNNLVSSDEEIY. [2Fe-2S] cluster-binding residues include C170, C181, C184, and C186. The interval 170-186 is fe-S binding site A; it reads CEDKKKVVNRVCDNCTC. Residues C216, C219, C227, and C230 each coordinate [4Fe-4S] cluster. 2 short sequence motifs (cx2C motif) span residues 216-219 and 227-230; these read CGNC and CGSC. A fe-S binding site B region spans residues 216–230; that stretch reads CGNCYLGDAFRCGSC.

Belongs to the anamorsin family. Monomer. It depends on [2Fe-2S] cluster as a cofactor. [4Fe-4S] cluster is required as a cofactor.

It localises to the cytoplasm. The protein resides in the mitochondrion intermembrane space. Functionally, component of the cytosolic iron-sulfur (Fe-S) protein assembly (CIA) machinery. Required for the maturation of extramitochondrial Fe-S proteins. Part of an electron transfer chain functioning in an early step of cytosolic Fe-S biogenesis, facilitating the de novo assembly of a [4Fe-4S] cluster on the cytosolic Fe-S scaffold complex. Electrons are transferred from NADPH via a FAD- and FMN-containing diflavin oxidoreductase. Together with the diflavin oxidoreductase, also required for the assembly of the diferric tyrosyl radical cofactor of ribonucleotide reductase (RNR), probably by providing electrons for reduction during radical cofactor maturation in the catalytic small subunit. The chain is Anamorsin homolog from Plasmodium yoelii yoelii.